A 484-amino-acid polypeptide reads, in one-letter code: Muscarinic acetylcholine receptor M4 (484 aa).

The Extracellular segment spans residues 1–32 (MENDTWENESSASNHSIDETIVEIPGKYQTME). N-linked (GlcNAc...) asparagine glycosylation is found at asparagine 3, asparagine 8, and asparagine 14. The chain crosses the membrane as a helical span at residues 33-55 (MIFIATVTGSLSLVTVVGNILVM). Residues 56–69 (LSIKVNRQLQTVNN) are Cytoplasmic-facing. Residues 70–90 (YFLFSLACADLIIGVFSMNLY) traverse the membrane as a helical segment. At 91 to 107 (SLYIIKGYWPLGPIVCD) the chain is on the extracellular side. Cysteine 106 and cysteine 186 are oxidised to a cystine. The helical transmembrane segment at 108 to 129 (LWLALDYVVSNASVMNLLIISL) threads the bilayer. The Cytoplasmic portion of the chain corresponds to 130 to 149 (ERXFCVTKPLTYPARRTTKM). Residues 150-172 (AGLMIAAAWLLSFELWAPAILFW) traverse the membrane as a helical segment. Over 173–194 (QFIVGQRTVPSGECYIQFLSNP) the chain is Extracellular. Residues 195–217 (AVTFGTAIAAFYLPVVIMTILYI) traverse the membrane as a helical segment. Topologically, residues 218–406 (HISLASRSRV…AAREKKVTRT (189 aa)) are cytoplasmic. The segment at 255-316 (NIPKQDAGDK…EKQPLSEASS (62 aa)) is disordered. Basic and acidic residues predominate over residues 260–270 (DAGDKVVEKKN). The chain crosses the membrane as a helical span at residues 407–427 (IFAILLAFIITWTPYNVMVLI). Over 428–441 (NTFCQTCIPETIWY) the chain is Extracellular. The chain crosses the membrane as a helical span at residues 442–461 (IGYWLCYVNSTINPACYALC). The Cytoplasmic segment spans residues 462–484 (NATFKKTFKHLLMCQYKSIGTAR).

This sequence belongs to the G-protein coupled receptor 1 family. Muscarinic acetylcholine receptor subfamily. CHRM4 sub-subfamily.

The protein resides in the cell membrane. It localises to the postsynaptic cell membrane. In terms of biological role, the muscarinic acetylcholine receptor mediates various cellular responses, including inhibition of adenylate cyclase, breakdown of phosphoinositides and modulation of potassium channels through the action of G proteins. Primary transducing effect is inhibition of adenylate cyclase. The chain is Muscarinic acetylcholine receptor M4 (chrm4) from Xenopus laevis (African clawed frog).